The sequence spans 511 residues: Cobyric acid synthase (511 aa).

In terms of domain architecture, GATase cobBQ-type spans 251–443 (LLDIAIICLP…IHGIFDNDVF (193 aa)). Cys332 functions as the Nucleophile in the catalytic mechanism. The active site involves His435.

Belongs to the CobB/CobQ family. CobQ subfamily.

It functions in the pathway cofactor biosynthesis; adenosylcobalamin biosynthesis. Its function is as follows. Catalyzes amidations at positions B, D, E, and G on adenosylcobyrinic A,C-diamide. NH(2) groups are provided by glutamine, and one molecule of ATP is hydrogenolyzed for each amidation. The polypeptide is Cobyric acid synthase (Listeria monocytogenes serotype 4a (strain HCC23)).